The sequence spans 399 residues: Elongation factor Tu (399 aa).

The region spanning 10–209 is the tr-type G domain; the sequence is KPHVNIGTIG…EVDAYIPTPE (200 aa). A G1 region spans residues 19 to 26; the sequence is GHVDHGKT. GTP is bound at residue 19–26; that stretch reads GHVDHGKT. Thr26 contacts Mg(2+). The G2 stretch occupies residues 60–64; the sequence is GITIA. Positions 81 to 84 are G3; sequence DCPG. Residues 81-85 and 136-139 contribute to the GTP site; these read DCPGH and NKQD. The tract at residues 136–139 is G4; it reads NKQD. Residues 174–176 form a G5 region; sequence SAL.

The protein belongs to the TRAFAC class translation factor GTPase superfamily. Classic translation factor GTPase family. EF-Tu/EF-1A subfamily. In terms of assembly, monomer.

It is found in the cytoplasm. The catalysed reaction is GTP + H2O = GDP + phosphate + H(+). Its function is as follows. GTP hydrolase that promotes the GTP-dependent binding of aminoacyl-tRNA to the A-site of ribosomes during protein biosynthesis. The protein is Elongation factor Tu of Helicobacter pylori (strain Shi470).